Consider the following 610-residue polypeptide: Zinc metalloproteinase-disintegrin-like acurhagin (610 aa).

The signal sequence occupies residues 1–20 (MIQVLLVTICLAAFPYQGSS). Residues 21–191 (IILESGDVND…ISQLNLIPEQ (171 aa)) constitute a propeptide that is removed on maturation. Residue Gln-192 is modified to Pyrrolidone carboxylic acid. The Peptidase M12B domain occupies 198 to 394 (KYVETVVVVD…HNPECIDNEP (197 aa)). Ca(2+) is bound by residues Glu-201 and Asp-285. Cystine bridges form between Cys-309–Cys-389, Cys-349–Cys-373, and Cys-351–Cys-356. Residue His-334 coordinates Zn(2+). Glu-335 is an active-site residue. His-338 and His-344 together coordinate Zn(2+). An N-linked (GlcNAc...) asparagine glycan is attached at Asn-372. Ca(2+) is bound by residues Cys-389, Asn-392, Asn-407, Leu-409, Glu-411, Glu-414, and Asp-417. Residues 402–488 (PPLCGNELLE…ECPADVFHKN (87 aa)) form the Disintegrin domain. Cystine bridges form between Cys-405/Cys-434, Cys-416/Cys-429, Cys-418/Cys-424, Cys-428/Cys-451, Cys-442/Cys-448, Cys-447/Cys-473, Cys-460/Cys-480, Cys-467/Cys-499, Cys-492/Cys-504, Cys-511/Cys-561, Cys-526/Cys-572, Cys-539/Cys-549, Cys-556/Cys-598, and Cys-592/Cys-603. The short motif at 466–468 (ECD) is the D/ECD-tripeptide element. Ca(2+) contacts are provided by Asp-468, Pro-469, Glu-471, Asp-483, and Val-484.

This sequence belongs to the venom metalloproteinase (M12B) family. P-III subfamily. P-IIIa sub-subfamily. As to quaternary structure, monomer. Zn(2+) serves as cofactor. Post-translationally, N-glycosylated. Expressed by the venom gland.

It localises to the secreted. The proteinase activity is slightly enhanced by Ca(2+) and Mg(2+), but is completely inhibited by Zn(2+). Is completely inhibited by phenanthroline and EDTA. Not inhibited by PMSF. In terms of biological role, snake venom zinc metalloprotease that causes hemorrhage and dose-dependently inhibits platelet aggregation triggered by collagen. This inhibition is due to its binding to glycoprotein VI (GP6) and collagen. The binding to GP6 results in inhibition of the signaling pathway (decrease of tyrosine phosphorylation of signaling proteins such as Syk, LAT, PI3-K and PLCgamma2). Preferentially cleaves alpha chain (FGA) of fibrinogen, followed by beta chain (FGB). Also degrades the extracellular matrix protein fibronectin (FN1), and cleaves collagen and von Willebrand factor (VWF). This chain is Zinc metalloproteinase-disintegrin-like acurhagin, found in Deinagkistrodon acutus (Hundred-pace snake).